The primary structure comprises 128 residues: Glycine cleavage system H protein (128 aa).

A Lipoyl-binding domain is found at 25–107; the sequence is TVRVGITDFA…YEGGWLFEIT (83 aa). Lys66 is modified (N6-lipoyllysine).

It belongs to the GcvH family. As to quaternary structure, the glycine cleavage system is composed of four proteins: P, T, L and H. Requires (R)-lipoate as cofactor.

The glycine cleavage system catalyzes the degradation of glycine. The H protein shuttles the methylamine group of glycine from the P protein to the T protein. This chain is Glycine cleavage system H protein, found in Micrococcus luteus (strain ATCC 4698 / DSM 20030 / JCM 1464 / CCM 169 / CCUG 5858 / IAM 1056 / NBRC 3333 / NCIMB 9278 / NCTC 2665 / VKM Ac-2230) (Micrococcus lysodeikticus).